The following is a 220-amino-acid chain: uncharacterized protein (220 aa).

The next 7 helical transmembrane spans lie at 25 to 45, 50 to 70, 74 to 94, 105 to 125, 135 to 155, 158 to 178, and 196 to 216; these read YFLL…SMSL, PGLI…YKLS, LGIL…GPIL, IVVL…AYVL, SGTI…SFFF, PMLY…GILY, and VSIF…FSIL.

It belongs to the BI1 family.

The protein localises to the cell membrane. This is an uncharacterized protein from Pasteurella multocida (strain Pm70).